A 710-amino-acid chain; its full sequence is Prolyl endopeptidase (710 aa).

Met-1 is subject to N-acetylmethionine. Lys-157 carries the post-translational modification N6-acetyllysine. Catalysis depends on charge relay system residues Ser-554, Asp-641, and His-680.

It belongs to the peptidase S9A family.

The protein localises to the cytoplasm. It carries out the reaction Hydrolysis of Pro-|-Xaa &gt;&gt; Ala-|-Xaa in oligopeptides.. Functionally, cleaves peptide bonds on the C-terminal side of prolyl residues within peptides that are up to approximately 30 amino acids long. The protein is Prolyl endopeptidase (Prep) of Mus musculus (Mouse).